Reading from the N-terminus, the 117-residue chain is Peptidyl-tRNA hydrolase (117 aa).

The protein belongs to the PTH2 family.

The protein localises to the cytoplasm. It catalyses the reaction an N-acyl-L-alpha-aminoacyl-tRNA + H2O = an N-acyl-L-amino acid + a tRNA + H(+). Its function is as follows. The natural substrate for this enzyme may be peptidyl-tRNAs which drop off the ribosome during protein synthesis. This is Peptidyl-tRNA hydrolase from Thermoplasma acidophilum (strain ATCC 25905 / DSM 1728 / JCM 9062 / NBRC 15155 / AMRC-C165).